The primary structure comprises 165 residues: uncharacterized protein (165 aa).

Residues 7–29 traverse the membrane as a helical segment; sequence YPLIFTAFLLIAFCLIFFSYHLI.

Its subcellular location is the membrane. This is an uncharacterized protein from Bacillus subtilis (strain 168).